Reading from the N-terminus, the 31-residue chain is Hemocyanin subunit 2 (31 aa).

It belongs to the tyrosinase family. Hemocyanin subfamily. As to expression, hemolymph.

Its subcellular location is the secreted. The protein resides in the extracellular space. Functionally, hemocyanins are copper-containing oxygen carriers occurring freely dissolved in the hemolymph of many mollusks and arthropods. The chain is Hemocyanin subunit 2 from Maja squinado (Mediterranean spider crab).